Here is a 294-residue protein sequence, read N- to C-terminus: Nucleotide-binding protein CLB_3433 (294 aa).

8–15 (GLSGAGKT) contributes to the ATP binding site. GTP is bound at residue 59–62 (DIRG).

The protein belongs to the RapZ-like family.

Its function is as follows. Displays ATPase and GTPase activities. The protein is Nucleotide-binding protein CLB_3433 of Clostridium botulinum (strain ATCC 19397 / Type A).